The sequence spans 550 residues: Arginine--tRNA ligase (550 aa).

The 'HIGH' region signature appears at 130–140 (ANPTGPIHIGG).

It belongs to the class-I aminoacyl-tRNA synthetase family. In terms of assembly, monomer.

It is found in the cytoplasm. The enzyme catalyses tRNA(Arg) + L-arginine + ATP = L-arginyl-tRNA(Arg) + AMP + diphosphate. This Mycobacterium sp. (strain JLS) protein is Arginine--tRNA ligase.